The chain runs to 423 residues: Glutamate-1-semialdehyde 2,1-aminomutase (423 aa).

At Lys262 the chain carries N6-(pyridoxal phosphate)lysine.

The protein belongs to the class-III pyridoxal-phosphate-dependent aminotransferase family. HemL subfamily. The cofactor is pyridoxal 5'-phosphate.

The protein localises to the cytoplasm. The catalysed reaction is (S)-4-amino-5-oxopentanoate = 5-aminolevulinate. It participates in porphyrin-containing compound metabolism; protoporphyrin-IX biosynthesis; 5-aminolevulinate from L-glutamyl-tRNA(Glu): step 2/2. This Methanosphaera stadtmanae (strain ATCC 43021 / DSM 3091 / JCM 11832 / MCB-3) protein is Glutamate-1-semialdehyde 2,1-aminomutase.